Reading from the N-terminus, the 440-residue chain is Chromosomal replication initiator protein DnaA (440 aa).

The interval 1-75 (MNPNQILENL…QSGNKASVLI (75 aa)) is domain I, interacts with DnaA modulators. The interval 75–99 (IQAQSAKQSSKSTKIDIAHIKAQST) is domain II. The tract at residues 100–316 (ILNPSFTFES…GIIISLNAYA (217 aa)) is domain III, AAA+ region. ATP is bound by residues Gly146, Gly148, Lys149, and Thr150. A domain IV, binds dsDNA region spans residues 317–440 (TILGQEITLE…KNKILVKSQS (124 aa)).

The protein belongs to the DnaA family. As to quaternary structure, oligomerizes as a right-handed, spiral filament on DNA at oriC.

The protein localises to the cytoplasm. In terms of biological role, plays an essential role in the initiation and regulation of chromosomal replication. ATP-DnaA binds to the origin of replication (oriC) to initiate formation of the DNA replication initiation complex once per cell cycle. Binds the DnaA box (a 9 base pair repeat at the origin) and separates the double-stranded (ds)DNA. Forms a right-handed helical filament on oriC DNA; dsDNA binds to the exterior of the filament while single-stranded (ss)DNA is stabiized in the filament's interior. The ATP-DnaA-oriC complex binds and stabilizes one strand of the AT-rich DNA unwinding element (DUE), permitting loading of DNA polymerase. After initiation quickly degrades to an ADP-DnaA complex that is not apt for DNA replication. Binds acidic phospholipids. This Campylobacter jejuni subsp. jejuni serotype O:6 (strain 81116 / NCTC 11828) protein is Chromosomal replication initiator protein DnaA.